The following is a 641-amino-acid chain: Acetyl-coenzyme A synthetase (641 aa).

Residues 186 to 189 (RGGK) and Thr-304 each bind CoA. ATP-binding positions include 380 to 382 (GEP), 404 to 409 (DTWWQT), Asp-493, and Arg-508. CoA is bound at residue Ser-516. ATP is bound at residue Arg-519. The Mg(2+) site is built by Val-530, His-532, and Ile-535. An N6-acetyllysine modification is found at Lys-602.

This sequence belongs to the ATP-dependent AMP-binding enzyme family. It depends on Mg(2+) as a cofactor. Acetylated. Deacetylation by the SIR2-homolog deacetylase activates the enzyme.

The enzyme catalyses acetate + ATP + CoA = acetyl-CoA + AMP + diphosphate. In terms of biological role, catalyzes the conversion of acetate into acetyl-CoA (AcCoA), an essential intermediate at the junction of anabolic and catabolic pathways. AcsA undergoes a two-step reaction. In the first half reaction, AcsA combines acetate with ATP to form acetyl-adenylate (AcAMP) intermediate. In the second half reaction, it can then transfer the acetyl group from AcAMP to the sulfhydryl group of CoA, forming the product AcCoA. This chain is Acetyl-coenzyme A synthetase, found in Gamma-proteobacterium EBAC31A08.